A 415-amino-acid polypeptide reads, in one-letter code: Actin-like protein 7B (415 aa).

The segment at 1–35 (MATRNSPMALGTAQGDPGEAGTRPGSDAGLRDTGA) is disordered. Position 6 is a phosphoserine (Ser6).

Belongs to the actin family.

Its subcellular location is the cytoplasm. The protein localises to the cytoskeleton. This is Actin-like protein 7B (ACTL7B) from Macaca fascicularis (Crab-eating macaque).